Here is a 295-residue protein sequence, read N- to C-terminus: Tyrosine recombinase XerC (295 aa).

A Core-binding (CB) domain is found at methionine 1–valine 85. Residues histidine 106–aspartate 285 form the Tyr recombinase domain. Active-site residues include arginine 145, lysine 169, histidine 237, arginine 240, and histidine 263. Tyrosine 272 (O-(3'-phospho-DNA)-tyrosine intermediate) is an active-site residue.

The protein belongs to the 'phage' integrase family. XerC subfamily. Forms a cyclic heterotetrameric complex composed of two molecules of XerC and two molecules of XerD.

Its subcellular location is the cytoplasm. Its function is as follows. Site-specific tyrosine recombinase, which acts by catalyzing the cutting and rejoining of the recombining DNA molecules. The XerC-XerD complex is essential to convert dimers of the bacterial chromosome into monomers to permit their segregation at cell division. It also contributes to the segregational stability of plasmids. This is Tyrosine recombinase XerC from Mannheimia succiniciproducens (strain KCTC 0769BP / MBEL55E).